The following is a 460-amino-acid chain: MATEAKRPKTGDEKSVLEPLNNFLLWCESVQLTLSDKVYLSKEGTAAEYGMLAKEDIEEGHVLFTIPREALLHQGTTKVKKVLEEGKKCLESASGWVPLLLSLMYEYTSSTSHWKPYLSLWPDFRTLDQPMFWSEEECDKLLKGTGIPESVITDLRKLQDEYNSVVLPFMKSHPDLWDPEKHNLELYKSLVAFVMAYSFQEPVEDDDEDEEDDEKKPNLPMMVPMADMLNHISKHNANLEYTPECLKMVSIRRIGKGEEVFNTYGQMANWQLLHMYGFAEPFPNNINETADIKMASVYKAAAQVARSEANQQLLEDKWKMLCEMEVVGEKGVFIFGQSGSLTYHELYTTLKVLCMSSQIFEDFRENEGWEEDDEDDDDKMEQDLSFEGLASLSVEWKRLLCVAATETLDSYNEDVETDRRLMEDQRALAELSSRERRALYVRLGQKNILQRIQQLTKPAS.

In terms of domain architecture, SET spans 28 to 265; that stretch reads ESVQLTLSDK…KGEEVFNTYG (238 aa).

It belongs to the class V-like SAM-binding methyltransferase superfamily. Histone-lysine methyltransferase family. SETD6 subfamily.

The protein resides in the nucleus. Its function is as follows. Protein-lysine N-methyltransferase. This chain is N-lysine methyltransferase setd6 (setd6), found in Danio rerio (Zebrafish).